The primary structure comprises 249 residues: 5'-nucleotidase SurE (249 aa).

Residues aspartate 8, aspartate 9, serine 39, and asparagine 91 each contribute to the a divalent metal cation site.

The protein belongs to the SurE nucleotidase family. The cofactor is a divalent metal cation.

It is found in the cytoplasm. It carries out the reaction a ribonucleoside 5'-phosphate + H2O = a ribonucleoside + phosphate. Functionally, nucleotidase that shows phosphatase activity on nucleoside 5'-monophosphates. This chain is 5'-nucleotidase SurE, found in Magnetococcus marinus (strain ATCC BAA-1437 / JCM 17883 / MC-1).